We begin with the raw amino-acid sequence, 473 residues long: Methionine aminopeptidase 2 (473 aa).

The interval 23–121 is disordered; sequence LAEDSSNGTQ…KLVSIDQSYP (99 aa). Positions 41 to 53 are enriched in polar residues; it reads KATTAVGQDNGNN. The segment covering 73-83 has biased composition (acidic residues); the sequence is DDDDDDEDDDV. The segment covering 84-93 has biased composition (low complexity); it reads AAAAAAVGDA. Over residues 97–113 the composition is skewed to basic residues; sequence KKKKKKKSSNKKKKKKL. Substrate is bound at residue histidine 224. Residues aspartate 244, aspartate 255, and histidine 326 each coordinate a divalent metal cation. Histidine 334 is a binding site for substrate. Glutamate 359 and glutamate 454 together coordinate a divalent metal cation.

Belongs to the peptidase M24A family. Methionine aminopeptidase eukaryotic type 2 subfamily. Co(2+) serves as cofactor. Zn(2+) is required as a cofactor. Requires Mn(2+) as cofactor. The cofactor is Fe(2+).

The protein resides in the cytoplasm. The catalysed reaction is Release of N-terminal amino acids, preferentially methionine, from peptides and arylamides.. Its function is as follows. Cotranslationally removes the N-terminal methionine from nascent proteins. The N-terminal methionine is often cleaved when the second residue in the primary sequence is small and uncharged (Met-Ala-, Cys, Gly, Pro, Ser, Thr, or Val). The protein is Methionine aminopeptidase 2 of Lodderomyces elongisporus (strain ATCC 11503 / CBS 2605 / JCM 1781 / NBRC 1676 / NRRL YB-4239) (Yeast).